The sequence spans 277 residues: Type II restriction enzyme RsrI (277 aa).

This sequence belongs to the EcoRI type II restriction endonuclease family. In terms of assembly, homodimer. It depends on Mg(2+) as a cofactor.

It catalyses the reaction Endonucleolytic cleavage of DNA to give specific double-stranded fragments with terminal 5'-phosphates.. In terms of biological role, a P subtype restriction enzyme that recognizes the double-stranded sequence 5'-GAATTC-3' and cleaves after G-1. The protein is Type II restriction enzyme RsrI (rsrIR) of Cereibacter sphaeroides (Rhodobacter sphaeroides).